Consider the following 213-residue polypeptide: Isopentenyl-diphosphate Delta-isomerase (213 aa).

Basic and acidic residues predominate over residues 1 to 10; the sequence is MRDSMSEADR. Residues 1–34 form a disordered region; the sequence is MRDSMSEADRSSPGSGKTDREDETAENATQDVIA. 3 residues coordinate Mn(2+): histidine 51, histidine 58, and histidine 95. In terms of domain architecture, Nudix hydrolase spans 56-193; sequence VRHRAFTCLL…RQLRLCPWFE (138 aa). Residue glutamate 113 participates in Mg(2+) binding. Positions 142 and 144 each coordinate Mn(2+). Glutamate 144 is an active-site residue.

The protein belongs to the IPP isomerase type 1 family. Mg(2+) is required as a cofactor. Requires Mn(2+) as cofactor.

The protein resides in the cytoplasm. It catalyses the reaction isopentenyl diphosphate = dimethylallyl diphosphate. It functions in the pathway isoprenoid biosynthesis; dimethylallyl diphosphate biosynthesis; dimethylallyl diphosphate from isopentenyl diphosphate: step 1/1. Its function is as follows. Catalyzes the 1,3-allylic rearrangement of the homoallylic substrate isopentenyl (IPP) to its highly electrophilic allylic isomer, dimethylallyl diphosphate (DMAPP). The protein is Isopentenyl-diphosphate Delta-isomerase of Halobacterium salinarum (strain ATCC 700922 / JCM 11081 / NRC-1) (Halobacterium halobium).